Here is a 135-residue protein sequence, read N- to C-terminus: Cytochrome b5, seed isoform (135 aa).

A Cytochrome b5 heme-binding domain is found at 5 to 81 (SKVFTLAEVS…LDEYYVGDID (77 aa)). Residues H40 and H64 each coordinate heme. A helical membrane pass occupies residues 107–127 (FIVKLLQFLVPLIILGVAFGV).

Belongs to the cytochrome b5 family. As to expression, specifically expressed in developing seeds.

It localises to the endoplasmic reticulum membrane. The protein resides in the microsome membrane. In terms of biological role, cytochrome b5 is a membrane bound hemoprotein which function as an electron carrier for several membrane bound oxygenases. May play a key role in the modification by desaturation of fatty acids in the endoplasmic reticulum, which in the developing seed is utilized for membrane synthesis and in the developmentally regulated production of large amounts of storage lipids. The chain is Cytochrome b5, seed isoform from Nicotiana tabacum (Common tobacco).